Reading from the N-terminus, the 759-residue chain is Glucosylceramidase (759 aa).

The active-site Proton donor is the E247. The active-site Nucleophile is E497. Positions 576 to 600 are disordered; the sequence is AFENESQRDPQSPAYSESQRNTESY. Positions 584–599 are enriched in polar residues; the sequence is DPQSPAYSESQRNTES.

The protein belongs to the glycosyl hydrolase 5 (cellulase A) family.

The protein resides in the membrane. The enzyme catalyses a beta-D-glucosyl-(1&lt;-&gt;1')-N-acylsphing-4-enine + H2O = an N-acylsphing-4-enine + D-glucose. In terms of biological role, specifically hydrolyzes the glucosidic linkage in glucosylceramide. May prevent accumulation of aberrent glucosylceramide containing immature ceramide. The chain is Glucosylceramidase from Aspergillus fumigatus (Neosartorya fumigata).